The primary structure comprises 71 residues: ATP synthase F(0) complex subunit e, mitochondrial (71 aa).

An N6-acetyllysine modification is found at lysine 34. Serine 68 is subject to Phosphoserine.

It belongs to the ATPase e subunit family. As to quaternary structure, component of the ATP synthase complex composed at least of ATP5F1A/subunit alpha, ATP5F1B/subunit beta, ATP5MC1/subunit c (homooctomer), MT-ATP6/subunit a, MT-ATP8/subunit 8, ATP5ME/subunit e, ATP5MF/subunit f, ATP5MG/subunit g, ATP5MK/subunit k, ATP5MJ/subunit j, ATP5F1C/subunit gamma, ATP5F1D/subunit delta, ATP5F1E/subunit epsilon, ATP5PF/subunit F6, ATP5PB/subunit b, ATP5PD/subunit d, ATP5PO/subunit OSCP. ATP synthase complex consists of a soluble F(1) head domain (subunits alpha(3) and beta(3)) - the catalytic core - and a membrane F(0) domain - the membrane proton channel (subunits c, a, 8, e, f, g, k and j). These two domains are linked by a central stalk (subunits gamma, delta, and epsilon) rotating inside the F1 region and a stationary peripheral stalk (subunits F6, b, d, and OSCP).

It is found in the mitochondrion. The protein resides in the mitochondrion inner membrane. Functionally, subunit e, of the mitochondrial membrane ATP synthase complex (F(1)F(0) ATP synthase or Complex V) that produces ATP from ADP in the presence of a proton gradient across the membrane which is generated by electron transport complexes of the respiratory chain. ATP synthase complex consist of a soluble F(1) head domain - the catalytic core - and a membrane F(1) domain - the membrane proton channel. These two domains are linked by a central stalk rotating inside the F(1) region and a stationary peripheral stalk. During catalysis, ATP synthesis in the catalytic domain of F(1) is coupled via a rotary mechanism of the central stalk subunits to proton translocation. In vivo, can only synthesize ATP although its ATP hydrolase activity can be activated artificially in vitro. Part of the complex F(0) domain. The polypeptide is ATP synthase F(0) complex subunit e, mitochondrial (Sus scrofa (Pig)).